A 265-amino-acid chain; its full sequence is Phosphonates import ATP-binding protein PhnC (265 aa).

An ABC transporter domain is found at 18–262; sequence LVVEHLRKEY…HLKQIYGGEE (245 aa). Residue 51 to 58 participates in ATP binding; sequence GPSGTGKS.

This sequence belongs to the ABC transporter superfamily. Phosphonates importer (TC 3.A.1.9.1) family. As to quaternary structure, the complex is composed of two ATP-binding proteins (PhnC), two transmembrane proteins (PhnE) and a solute-binding protein (PhnD).

The protein resides in the cell inner membrane. It carries out the reaction phosphonate(out) + ATP + H2O = phosphonate(in) + ADP + phosphate + H(+). Its function is as follows. Part of the ABC transporter complex PhnCDE involved in phosphonates import. Responsible for energy coupling to the transport system. The protein is Phosphonates import ATP-binding protein PhnC of Nitratidesulfovibrio vulgaris (strain ATCC 29579 / DSM 644 / CCUG 34227 / NCIMB 8303 / VKM B-1760 / Hildenborough) (Desulfovibrio vulgaris).